The primary structure comprises 512 residues: Protein spinster homolog 3 (512 aa).

Residues 1–30 (MAGGMSAECPEPGPGGLQGQSPGPGRQCPP) form a disordered region. 12 helical membrane passes run 50–70 (VLCY…GVLL), 84–104 (GLLQ…FGYL), 112–132 (ATMS…SFIS), 145–165 (IVGT…GDLF), 173–193 (VLAV…VLGS), 204–224 (WALR…ILLV), 260–280 (FVWS…LGFW), 309–329 (LIFG…GAEA), 343–365 (LICA…LAPT), 377–397 (GELL…SVVV), 411–431 (VGHI…SSVL), and 450–470 (FLCC…TALY). The interval 481-512 (PVTGTPDSNDVDSNDLERQGLLSGAGASTEEP) is disordered.

The protein belongs to the major facilitator superfamily. Spinster (TC 2.A.1.49) family.

It is found in the membrane. In terms of biological role, sphingolipid transporter. This is Protein spinster homolog 3 (SPNS3) from Homo sapiens (Human).